The primary structure comprises 162 residues: 6,7-dimethyl-8-ribityllumazine synthase (162 aa).

5-amino-6-(D-ribitylamino)uracil-binding positions include Tyr27, 58–60 (ALE), and 87–89 (CVI). 92–93 (ET) serves as a coordination point for (2S)-2-hydroxy-3-oxobutyl phosphate. His95 (proton donor) is an active-site residue. Position 120 (Asn120) interacts with 5-amino-6-(D-ribitylamino)uracil. Arg134 is a binding site for (2S)-2-hydroxy-3-oxobutyl phosphate.

The protein belongs to the DMRL synthase family.

It carries out the reaction (2S)-2-hydroxy-3-oxobutyl phosphate + 5-amino-6-(D-ribitylamino)uracil = 6,7-dimethyl-8-(1-D-ribityl)lumazine + phosphate + 2 H2O + H(+). It participates in cofactor biosynthesis; riboflavin biosynthesis; riboflavin from 2-hydroxy-3-oxobutyl phosphate and 5-amino-6-(D-ribitylamino)uracil: step 1/2. Functionally, catalyzes the formation of 6,7-dimethyl-8-ribityllumazine by condensation of 5-amino-6-(D-ribitylamino)uracil with 3,4-dihydroxy-2-butanone 4-phosphate. This is the penultimate step in the biosynthesis of riboflavin. The polypeptide is 6,7-dimethyl-8-ribityllumazine synthase (Azorhizobium caulinodans (strain ATCC 43989 / DSM 5975 / JCM 20966 / LMG 6465 / NBRC 14845 / NCIMB 13405 / ORS 571)).